Here is a 431-residue protein sequence, read N- to C-terminus: Adenylosuccinate lyase (431 aa).

N(6)-(1,2-dicarboxyethyl)-AMP is bound by residues 4-5 (RY), 67-69 (RHD), and 93-94 (TS). Residue histidine 141 is the Proton donor/acceptor of the active site. Glutamine 212 provides a ligand contact to N(6)-(1,2-dicarboxyethyl)-AMP. The active-site Proton donor/acceptor is the serine 262. N(6)-(1,2-dicarboxyethyl)-AMP-binding positions include serine 263, 268 to 270 (KRN), asparagine 276, and 307 to 311 (SAERI).

This sequence belongs to the lyase 1 family. Adenylosuccinate lyase subfamily. Homodimer and homotetramer. Residues from neighboring subunits contribute catalytic and substrate-binding residues to each active site.

The enzyme catalyses N(6)-(1,2-dicarboxyethyl)-AMP = fumarate + AMP. It catalyses the reaction (2S)-2-[5-amino-1-(5-phospho-beta-D-ribosyl)imidazole-4-carboxamido]succinate = 5-amino-1-(5-phospho-beta-D-ribosyl)imidazole-4-carboxamide + fumarate. Its pathway is purine metabolism; AMP biosynthesis via de novo pathway; AMP from IMP: step 2/2. The protein operates within purine metabolism; IMP biosynthesis via de novo pathway; 5-amino-1-(5-phospho-D-ribosyl)imidazole-4-carboxamide from 5-amino-1-(5-phospho-D-ribosyl)imidazole-4-carboxylate: step 2/2. Its function is as follows. Catalyzes two reactions in de novo purine nucleotide biosynthesis. Catalyzes the breakdown of 5-aminoimidazole- (N-succinylocarboxamide) ribotide (SAICAR or 2-[5-amino-1-(5-phospho-beta-D-ribosyl)imidazole-4-carboxamido]succinate) to 5-aminoimidazole-4-carboxamide ribotide (AICAR or 5-amino-1-(5-phospho-beta-D-ribosyl)imidazole-4-carboxamide) and fumarate, and of adenylosuccinate (ADS or N(6)-(1,2-dicarboxyethyl)-AMP) to adenosine monophosphate (AMP) and fumarate. This chain is Adenylosuccinate lyase (purB), found in Staphylococcus epidermidis (strain ATCC 35984 / DSM 28319 / BCRC 17069 / CCUG 31568 / BM 3577 / RP62A).